A 283-amino-acid chain; its full sequence is Pantothenate synthetase (283 aa).

Residue 30–37 (MGALHEGH) participates in ATP binding. Catalysis depends on histidine 37, which acts as the Proton donor. Glutamine 61 lines the (R)-pantoate pocket. Glutamine 61 serves as a coordination point for beta-alanine. Position 147–150 (147–150 (GEKD)) interacts with ATP. Glutamine 153 contributes to the (R)-pantoate binding site. ATP is bound by residues valine 176 and 184 to 187 (VSSR).

Belongs to the pantothenate synthetase family. As to quaternary structure, homodimer.

The protein localises to the cytoplasm. The catalysed reaction is (R)-pantoate + beta-alanine + ATP = (R)-pantothenate + AMP + diphosphate + H(+). It participates in cofactor biosynthesis; (R)-pantothenate biosynthesis; (R)-pantothenate from (R)-pantoate and beta-alanine: step 1/1. Functionally, catalyzes the condensation of pantoate with beta-alanine in an ATP-dependent reaction via a pantoyl-adenylate intermediate. In Chlorobium luteolum (strain DSM 273 / BCRC 81028 / 2530) (Pelodictyon luteolum), this protein is Pantothenate synthetase.